The sequence spans 318 residues: Ubiquitin-like domain-containing CTD phosphatase 1 (318 aa).

Ala2 is subject to N-acetylalanine. In terms of domain architecture, Ubiquitin-like spans 3–81 (LPIIVKWGGQ…IMMMGTREES (79 aa)). At Lys117 the chain carries N6-acetyllysine. In terms of domain architecture, FCP1 homology spans 133–294 (PREGKKLLVL…LKLTQYLKEI (162 aa)). Residues Asp143, Asp145, and Asp253 each contribute to the Mg(2+) site.

Mg(2+) serves as cofactor.

It localises to the nucleus. The enzyme catalyses O-phospho-L-seryl-[protein] + H2O = L-seryl-[protein] + phosphate. It carries out the reaction O-phospho-L-threonyl-[protein] + H2O = L-threonyl-[protein] + phosphate. Functionally, dephosphorylates 26S nuclear proteasomes, thereby decreasing their proteolytic activity. Recruited to the 19S regulatory particle of the 26S proteasome through its interaction with 19S component PSMD2/RPN1. Once recruited, dephosphorylates 19S component PSMC2/RPT1 which impairs PSMC2 ATPase activity and disrupts 26S proteasome assembly. Has also been reported to stimulate the proteolytic activity of the 26S proteasome. The polypeptide is Ubiquitin-like domain-containing CTD phosphatase 1 (UBLCP1) (Pongo abelii (Sumatran orangutan)).